The chain runs to 287 residues: uncharacterized protein (287 aa).

The protein belongs to the A.longa ORF167/ORF288 family.

It localises to the plastid. This is an uncharacterized protein from Euglena longa (Euglenophycean alga).